A 397-amino-acid polypeptide reads, in one-letter code: Tryptophan synthase beta chain (397 aa).

The residue at position 88 (Lys88) is an N6-(pyridoxal phosphate)lysine.

It belongs to the TrpB family. As to quaternary structure, tetramer of two alpha and two beta chains. Pyridoxal 5'-phosphate serves as cofactor.

It carries out the reaction (1S,2R)-1-C-(indol-3-yl)glycerol 3-phosphate + L-serine = D-glyceraldehyde 3-phosphate + L-tryptophan + H2O. It participates in amino-acid biosynthesis; L-tryptophan biosynthesis; L-tryptophan from chorismate: step 5/5. In terms of biological role, the beta subunit is responsible for the synthesis of L-tryptophan from indole and L-serine. This chain is Tryptophan synthase beta chain, found in Haemophilus influenzae (strain 86-028NP).